Reading from the N-terminus, the 352-residue chain is Organic solute transporter subunit alpha (352 aa).

The Extracellular portion of the chain corresponds to 1 to 45 (MDVAHPEEVTRFSPDILMEKFNVSEACFLPPPISIQLILQLTWLD). An N-linked (GlcNAc...) asparagine glycan is attached at Asn22. The helical transmembrane segment at 46-66 (IGVFAALTAMTVLTIAIYLEI) threads the bilayer. At 67 to 82 (VCYLMDKVKCPIKRKT) the chain is on the cytoplasmic side. A helical membrane pass occupies residues 83 to 103 (LMWNSAAPTVIAITSCLGLWV). The Extracellular portion of the chain corresponds to 104 to 108 (PRAIM). Residues 109–129 (FVDMAAAMYFGVGFYLMLLII) form a helical membrane-spanning segment. At 130–173 (VQGYGGEEAMLQHLATHTIRISTGPCCCCCPCLPHIHLTRQKYK) the chain is on the cytoplasmic side. A helical membrane pass occupies residues 174–194 (IFVLGAFQVAFLRPALFLLGV). Over 195 to 210 (VLWTNGLYDPDDWSST) the chain is Extracellular. A helical transmembrane segment spans residues 211-231 (SIFLWLNLFLGVSTILGLWPV). Over 232–250 (NVLFRHSKVLMADQKLTCK) the chain is Cytoplasmic. The chain crosses the membrane as a helical span at residues 251-271 (FALFQAILILSSLQNSIIGTL). Residues 272-294 (AGAGHIGCAPPYSARTRGQQMNN) lie on the Extracellular side of the membrane. A helical transmembrane segment spans residues 295–312 (QLLIIEMFFVGILTRISY). The Cytoplasmic portion of the chain corresponds to 313-352 (RKRDDRPGHRHVGEVQQIVRECDQPAIADQQADHSSISHI).

This sequence belongs to the OST-alpha family. In terms of assembly, interacts with slc51b. The Ost-alpha/Ost-beta complex is a heterodimer composed of alpha (slc51a) and beta (slc51b) subunit. Expressed in liver.

It localises to the cell membrane. Its subcellular location is the endoplasmic reticulum membrane. It catalyses the reaction taurocholate(out) = taurocholate(in). The enzyme catalyses prostaglandin E2(out) = prostaglandin E2(in). The catalysed reaction is estrone 3-sulfate(out) = estrone 3-sulfate(in). It carries out the reaction dehydroepiandrosterone 3-sulfate(out) = dehydroepiandrosterone 3-sulfate(in). It catalyses the reaction tauroursodeoxycholate(out) = tauroursodeoxycholate(in). The enzyme catalyses glycoursodeoxycholate(out) = glycoursodeoxycholate(in). The catalysed reaction is glycocholate(out) = glycocholate(in). It carries out the reaction taurochenodeoxycholate(out) = taurochenodeoxycholate(in). It catalyses the reaction glycochenodeoxycholate(out) = glycochenodeoxycholate(in). The enzyme catalyses taurodeoxycholate(out) = taurodeoxycholate(in). The catalysed reaction is glycodeoxycholate(out) = glycodeoxycholate(in). In terms of biological role, essential component of the Ost-alpha/Ost-beta complex, a heterodimer that acts as the intestinal basolateral transporter responsible for the translocation of bile acids (such as taurocholate), steroids (such as estrone sulfate), and eicosanoids (such as prostaglandin E2). The polypeptide is Organic solute transporter subunit alpha (slc51a) (Leucoraja erinaceus (Little skate)).